The primary structure comprises 182 residues: NADH-quinone oxidoreductase subunit I (182 aa).

2 4Fe-4S ferredoxin-type domains span residues 50–82 (IILSRDPDGDERCVACNLCAVACPVGCISLQKA) and 92–121 (EFFRINFSRCIFCGLCEEACPTTAIQMTPD). Residues C62, C65, C68, C72, C101, C104, C107, and C111 each contribute to the [4Fe-4S] cluster site.

Belongs to the complex I 23 kDa subunit family. NDH-1 is composed of 14 different subunits. Subunits NuoA, H, J, K, L, M, N constitute the membrane sector of the complex. Requires [4Fe-4S] cluster as cofactor.

The protein resides in the cell inner membrane. It carries out the reaction a quinone + NADH + 5 H(+)(in) = a quinol + NAD(+) + 4 H(+)(out). In terms of biological role, NDH-1 shuttles electrons from NADH, via FMN and iron-sulfur (Fe-S) centers, to quinones in the respiratory chain. The immediate electron acceptor for the enzyme in this species is believed to be ubiquinone. Couples the redox reaction to proton translocation (for every two electrons transferred, four hydrogen ions are translocated across the cytoplasmic membrane), and thus conserves the redox energy in a proton gradient. This chain is NADH-quinone oxidoreductase subunit I, found in Psychrobacter cryohalolentis (strain ATCC BAA-1226 / DSM 17306 / VKM B-2378 / K5).